Here is a 747-residue protein sequence, read N- to C-terminus: MRKFSVSKVALLAATMAPALLPAAARAEGTAAPAATAPATPMSNRDWWPNRLDLSPLRQHGVESNPMGGKFNYAEEFKTLDLAAVKKDIEALMTTSQDWWPADYGHYGPFFIRMAWHSAGTYRTADGRGGAGGGQQRFEPLNSWPDNVNLDKARRLLWPIKQKYGRKISWADLMVLTGNVALESMGFKTFGFAGGRADDWEADQVFWGPENKWLADQRYHGDRKLQNPLAAVQMGLIYVNPEGPNGNPDPLLAAKDIRETFGRMAMNDEETVALIAGGHTFGKAHGARKPEGCVGVDPAAGAVEDQGLGWNNKCGKGNAEDTVSSGLEGAWTANPIAWTTQYLDNLYAFEWVQTRSPAGAIQWVPKEDATFVPDAHVKDKLHKPIMFTTDLALKTDPAYRKITTKFRQNPDAFADAFARAWFKLTHRDMGPRWRYLGAMVPAEELIWQDPVPKATYAMIDAADVSALKGRILATGLTGPELVRAAWASAASFRGTDMRGGTDGGRIRLAPQKDWAANNPAELARVLKALEGVATEFNRAAKDGKKVSVANLVVLGGNAAIEQAAAKAGVTVEVPFTPGRTDASQAQTDVASFEFLKPAADGFRNYYDASANRLSPSEMLVERANLLTLSVPEMTVLVGGLRALDANAGGARHGVFTDRPGTLSNDFFVNLLGMETKWQKAATDGVYEGLDRKTGKTRWTATPVDLVFGSNSELRAVSEVYGSADANAKFVNDFVAAWTKVMNLGRPS.

Residues 1 to 27 (MRKFSVSKVALLAATMAPALLPAAARA) form the signal peptide. Positions 116–238 (WHSAGTYRTA…LAAVQMGLIY (123 aa)) form a cross-link, tryptophyl-tyrosyl-methioninium (Trp-Tyr) (with M-264). The Proton acceptor role is filled by His117. Residues 238-264 (YVNPEGPNGNPDPLLAAKDIRETFGRM) constitute a cross-link (tryptophyl-tyrosyl-methioninium (Tyr-Met) (with W-116)). His279 is a heme b binding site.

The protein belongs to the peroxidase family. Peroxidase/catalase subfamily. In terms of assembly, homodimer or homotetramer. The cofactor is heme b. Formation of the three residue Trp-Tyr-Met cross-link is important for the catalase, but not the peroxidase activity of the enzyme.

It catalyses the reaction H2O2 + AH2 = A + 2 H2O. The enzyme catalyses 2 H2O2 = O2 + 2 H2O. In terms of biological role, bifunctional enzyme with both catalase and broad-spectrum peroxidase activity. The chain is Catalase-peroxidase from Novosphingobium aromaticivorans (strain ATCC 700278 / DSM 12444 / CCUG 56034 / CIP 105152 / NBRC 16084 / F199).